Here is a 178-residue protein sequence, read N- to C-terminus: 2-C-methyl-D-erythritol 2,4-cyclodiphosphate synthase (178 aa).

A divalent metal cation-binding residues include Asp24, His26, and His61. 24–26 (DSH) is a 4-CDP-2-C-methyl-D-erythritol 2-phosphate binding site. 150–153 (TSGE) is a 4-CDP-2-C-methyl-D-erythritol 2-phosphate binding site.

It belongs to the IspF family. Homotrimer. It depends on a divalent metal cation as a cofactor.

It carries out the reaction 4-CDP-2-C-methyl-D-erythritol 2-phosphate = 2-C-methyl-D-erythritol 2,4-cyclic diphosphate + CMP. The protein operates within isoprenoid biosynthesis; isopentenyl diphosphate biosynthesis via DXP pathway; isopentenyl diphosphate from 1-deoxy-D-xylulose 5-phosphate: step 4/6. Its function is as follows. Involved in the biosynthesis of isopentenyl diphosphate (IPP) and dimethylallyl diphosphate (DMAPP), two major building blocks of isoprenoid compounds. Catalyzes the conversion of 4-diphosphocytidyl-2-C-methyl-D-erythritol 2-phosphate (CDP-ME2P) to 2-C-methyl-D-erythritol 2,4-cyclodiphosphate (ME-CPP) with a corresponding release of cytidine 5-monophosphate (CMP). This is 2-C-methyl-D-erythritol 2,4-cyclodiphosphate synthase from Chlamydia trachomatis serovar A (strain ATCC VR-571B / DSM 19440 / HAR-13).